Reading from the N-terminus, the 95-residue chain is Neurexophilin-3 (95 aa).

2 N-linked (GlcNAc...) asparagine glycosylation sites follow: N1 and N7. An III region spans residues 1-21 (NATGQGNISISLVPPSKAVEX). An IV (linker domain) region spans residues 22 to 30 (HQXQQIFIE). Positions 31 to 95 (AKASKIFNCR…YIAFYSTDYR (65 aa)) are v (Cys-rich).

This sequence belongs to the neurexophilin family.

The protein resides in the secreted. Its function is as follows. May be signaling molecules that resemble neuropeptides. Ligand for alpha-neurexins. The sequence is that of Neurexophilin-3 (NXPH3) from Macaca mulatta (Rhesus macaque).